Consider the following 304-residue polypeptide: Recombination-associated protein RdgC (304 aa).

The protein belongs to the RdgC family.

It localises to the cytoplasm. The protein localises to the nucleoid. Functionally, may be involved in recombination. The sequence is that of Recombination-associated protein RdgC from Shewanella sp. (strain W3-18-1).